The sequence spans 306 residues: MSDLHSSPTDQTSAPAHAGGGNRVVIVTGMSGAGKTMALKALEDMGWEAVDNLPLALAASLVRSGGGMARPLALGVDIRTRDFGVEPVLAALDHLMGESGLDVRLLFLDCEDDVLCRRFTETRRRHPMAVDRPLLDGIRHERALVSPLKRRADVMIDTTNQPPGEFKRLLAGHFGLESNGGLGVFVTSFAYRNGLPREADLVFDARFLANPHYVPELKPLTGRDPAVAQYVAADPAFGPFIESLTRLLEPLLPRFAAEGKSYLTIAVGCTGGRHRSVAIAEHLAQWMQRRGGKVELRHRELDERGS.

The span at 1-14 (MSDLHSSPTDQTSA) shows a compositional bias: polar residues. Residues 1-20 (MSDLHSSPTDQTSAPAHAGG) are disordered. 29 to 36 (GMSGAGKT) contacts ATP. 77 to 80 (DIRT) provides a ligand contact to GTP.

It belongs to the RapZ-like family.

Its function is as follows. Displays ATPase and GTPase activities. This chain is Nucleotide-binding protein amb4396, found in Paramagnetospirillum magneticum (strain ATCC 700264 / AMB-1) (Magnetospirillum magneticum).